The primary structure comprises 159 residues: Ribosomal RNA large subunit methyltransferase H (159 aa).

S-adenosyl-L-methionine contacts are provided by residues G108 and 127–132 (FSKMTF).

It belongs to the RNA methyltransferase RlmH family. As to quaternary structure, homodimer.

It localises to the cytoplasm. The catalysed reaction is pseudouridine(1915) in 23S rRNA + S-adenosyl-L-methionine = N(3)-methylpseudouridine(1915) in 23S rRNA + S-adenosyl-L-homocysteine + H(+). Specifically methylates the pseudouridine at position 1915 (m3Psi1915) in 23S rRNA. The protein is Ribosomal RNA large subunit methyltransferase H of Clostridium acetobutylicum (strain ATCC 824 / DSM 792 / JCM 1419 / IAM 19013 / LMG 5710 / NBRC 13948 / NRRL B-527 / VKM B-1787 / 2291 / W).